The sequence spans 745 residues: Elongation factor G, mitochondrial (745 aa).

Residues glutamate 40–glycine 317 enclose the tr-type G domain. GTP-binding positions include alanine 49–threonine 56, aspartate 116–histidine 120, and asparagine 170–aspartate 173.

This sequence belongs to the TRAFAC class translation factor GTPase superfamily. Classic translation factor GTPase family. EF-G/EF-2 subfamily.

The protein localises to the mitochondrion. Its pathway is protein biosynthesis; polypeptide chain elongation. Mitochondrial GTPase that catalyzes the GTP-dependent ribosomal translocation step during translation elongation. During this step, the ribosome changes from the pre-translocational (PRE) to the post-translocational (POST) state as the newly formed A-site-bound peptidyl-tRNA and P-site-bound deacylated tRNA move to the P and E sites, respectively. Catalyzes the coordinated movement of the two tRNA molecules, the mRNA and conformational changes in the ribosome. Essential during development as it acts as a retrograde signal from mitochondria to the nucleus to slow down cell proliferation if mitochondrial energy output is low. This Drosophila melanogaster (Fruit fly) protein is Elongation factor G, mitochondrial.